We begin with the raw amino-acid sequence, 809 residues long: F-BAR domain only protein 2 (809 aa).

The F-BAR domain occupies 3 to 250; that stretch reads MAHFVENFWG…NMANTTIESL (248 aa). Residues 3–274 are mediates dimerization and binding to membranes enriched in Pi(4,5)-P2 and induces their tubulation; that stretch reads MAHFVENFWG…PGLIEFEECD (272 aa). Residues 87-156 are a coiled coil; it reads HLDLVRKLQE…CVEQERLKKE (70 aa). Lys-297 participates in a covalent cross-link: Glycyl lysine isopeptide (Lys-Gly) (interchain with G-Cter in SUMO2). A disordered region spans residues 301-352; that stretch reads DAESVECPDADSLNIPDVDEEGFSIKPEANQNDTKENHFYSSSDSDSEDEEP. Position 312 is a phosphoserine (Ser-312). Phosphothreonine is present on Thr-385. Phosphoserine occurs at positions 387, 394, 402, and 403. The span at 390–416 shows a compositional bias: polar residues; the sequence is VSRHSPVQMNRNSSNEELTKSKPSSLP. 2 disordered regions span residues 390–422 and 435–536; these read VSRH…KGTN and LESS…PVSL. The segment covering 435–456 has biased composition (low complexity); the sequence is LESSSAPLTSSSSARPTTPLSL. A phosphoserine mark is found at Ser-487, Ser-492, Ser-495, Ser-507, Ser-509, Ser-510, and Ser-532. Positions 501 to 520 are enriched in low complexity; sequence PLARAESSSSISSSASLSAA. A mediates interaction with DAB2, EPS15, EPS15R and ITSN1 region spans residues 520–809; it reads ANTPTVGVSR…FATGRYLADC (290 aa). Residues 541–808 enclose the MHD domain; the sequence is TLPVAIALTE…RFATGRYLAD (268 aa).

It belongs to the FCHO family. As to quaternary structure, homodimer; disulfide-linked. May form homotetramer. Interacts with AP2A1. Interacts with EPS15, EPS15R, ITSN1 and ITSN2; recruit those scaffolding proteins which in turn may interact with the adaptor protein complex AP-2 at the plasma membrane. Interacts with DAB2 (via DPF motifs); mediates LDL receptor/LDLR endocytosis. Ubiquitinated. Mainly undergoes monoubiquitination but also polyubiquitination. Ubiquitously expressed (at protein level).

The protein localises to the membrane. The protein resides in the clathrin-coated pit. Functionally, functions in an early step of clathrin-mediated endocytosis. Has both a membrane binding/bending activity and the ability to recruit proteins essential to the formation of functional clathrin-coated pits. Has a lipid-binding activity with a preference for membranes enriched in phosphatidylserine and phosphoinositides (Pi(4,5) biphosphate) like the plasma membrane. Its membrane-bending activity might be important for the subsequent action of clathrin and adaptors in the formation of clathrin-coated vesicles. Involved in adaptor protein complex AP-2-dependent endocytosis of the transferrin receptor, it also functions in the AP-2-independent endocytosis of the LDL receptor. The protein is F-BAR domain only protein 2 (Fcho2) of Mus musculus (Mouse).